Here is a 361-residue protein sequence, read N- to C-terminus: Cilia- and flagella-associated protein 263 (361 aa).

The protein belongs to the CFAP263 family. Forms a complex with CFAP184; the interaction is required for functional activity in cilia.

It localises to the cell projection. Its subcellular location is the cilium. Its function is as follows. In complex with CFAP263, acts as a regulator of ciliary beating that connects radial spoke 3 (RS3) to the inner dynein arm (IDA) and the nexin-dynein regulatory complex (N-DRC). The complex is positioned parallel to N-DRC and forms a connection between the arch at the base of RS3, the IDA tail and N-DRC. The protein is Cilia- and flagella-associated protein 263 (CFAP263) of Tetrahymena thermophila (strain SB210).